Consider the following 147-residue polypeptide: D-aminoacyl-tRNA deacylase (147 aa).

A Gly-cisPro motif, important for rejection of L-amino acids motif is present at residues 136–137 (GP).

The protein belongs to the DTD family. Homodimer.

The protein resides in the cytoplasm. The catalysed reaction is glycyl-tRNA(Ala) + H2O = tRNA(Ala) + glycine + H(+). It catalyses the reaction a D-aminoacyl-tRNA + H2O = a tRNA + a D-alpha-amino acid + H(+). In terms of biological role, an aminoacyl-tRNA editing enzyme that deacylates mischarged D-aminoacyl-tRNAs. Also deacylates mischarged glycyl-tRNA(Ala), protecting cells against glycine mischarging by AlaRS. Acts via tRNA-based rather than protein-based catalysis; rejects L-amino acids rather than detecting D-amino acids in the active site. By recycling D-aminoacyl-tRNA to D-amino acids and free tRNA molecules, this enzyme counteracts the toxicity associated with the formation of D-aminoacyl-tRNA entities in vivo and helps enforce protein L-homochirality. The chain is D-aminoacyl-tRNA deacylase from Streptococcus sanguinis (strain SK36).